Consider the following 1491-residue polypeptide: Terminal uridylyltransferase 7 (1491 aa).

Thr64 is modified (phosphothreonine). 2 positions are modified to phosphoserine: Ser132 and Ser172. Positions 165–203 (MSEMEAGSPENKKQRSRPRKPRRTRTEDSEQDGDLDGPV) are disordered. The segment covering 178-187 (QRSRPRKPRR) has biased composition (basic residues). A Matrin-type zinc finger spans residues 244–274 (YTCKLCDALIDSIPFAHKHIKEKRHKKNLKE). In terms of domain architecture, PAP-associated 1 spans 551–600 (VGQLWVELLRFYALEFNLADLVISIRVKELISRESKDWPKKRIAIEDPYS). Ser600 and Ser747 each carry phosphoserine. Disordered stretches follow at residues 740 to 774 (AELP…KHPE) and 834 to 911 (QSRT…CGEN). Over residues 844-857 (DDEEEEEEEEEEEE) the composition is skewed to acidic residues. Thr865 bears the Phosphothreonine mark. The span at 885 to 897 (GEEDALSEEDDLA) shows a compositional bias: acidic residues. Ser891 is modified (phosphoserine). The sufficient for monouridylation activity stretch occupies residues 947–1491 (RKLTFTKGKS…ASVKRTQQES (545 aa)). A CCHC-type 1 zinc finger spans residues 959–976 (VVCSLCKREGHLKKDCPE). Residues 1043–1046 (SSKN), 1053–1056 (SDLD), Asn1126, Lys1148, 1166–1170 (SYAYT), and His1282 each bind UTP. Mg(2+) contacts are provided by Asp1054 and Asp1056. The PAP-associated 2 domain maps to 1230–1282 (VGQLWLGLLRFYTEEFDFKEHVISIRRKSLLTTFKKQWTSKYIVIEDPFDLNH). The segment at 1341 to 1358 (RCCRICGKIGHFMKDCPM) adopts a CCHC-type 2 zinc-finger fold. Disordered stretches follow at residues 1362 to 1399 (VRRR…EKEV) and 1463 to 1491 (PQFK…QQES). The span at 1377–1399 (SESKEKRSKEDKEIQNKYTEKEV) shows a compositional bias: basic and acidic residues. The segment at 1447–1464 (KRCFICGREGHIKKECPQ) adopts a CCHC-type 3 zinc-finger fold. A compositionally biased stretch (polar residues) spans 1470–1481 (GSLSSKYMTQGR).

The protein belongs to the DNA polymerase type-B-like family. The cofactor is Mg(2+). Mn(2+) is required as a cofactor.

The protein resides in the cytoplasm. It carries out the reaction RNA(n) + UTP = RNA(n)-3'-uridine ribonucleotide + diphosphate. Functionally, uridylyltransferase that mediates the terminal uridylation of mRNAs with short (less than 25 nucleotides) poly(A) tails, hence facilitating global mRNA decay. Essential for both oocyte maturation and fertility. Through 3' terminal uridylation of mRNA, sculpts, with TUT7, the maternal transcriptome by eliminating transcripts during oocyte growth. Involved in microRNA (miRNA)-induced gene silencing through uridylation of deadenylated miRNA targets. Also acts as a suppressor of miRNA biogenesis by mediating the terminal uridylation of miRNA precursors, including that of let-7 (pre-let-7). Uridylated pre-let-7 RNA is not processed by Dicer and undergo degradation. Pre-let-7 uridylation is strongly enhanced in the presence of LIN28A. Due to functional redundancy between ZCCHC6 and ZCCHC11, the identification of the specific role of each of these proteins is difficult. Involved in microRNA (miRNA)-induced gene silencing through uridylation of deadenylated miRNA targets. Also functions as an integral regulator of microRNA biogenesiS using 3 different uridylation mechanisms. Acts as a suppressor of miRNA biogenesis by mediating the terminal uridylation of some miRNA precursors, including that of let-7 (pre-let-7). Uridylated pre-let-7 RNA is not processed by Dicer and undergo degradation. Pre-let-7 oligouridylation is strongly enhanced in the presence of LIN28A. In the absence of LIN28A, TUT7 and TUT4 monouridylate group II pre-miRNAs, which includes most of pre-let7 members, that shapes an optimal 3' end overhang for efficient processing. Add oligo-U tails to truncated pre-miRNAS with a 5' overhang which may promote rapid degradation of non-functional pre-miRNA species. Does not play a role in replication-dependent histone mRNA degradation. Due to functional redundancy between TUT4 and TUT7, the identification of the specific role of each of these proteins is difficult. TUT4 and TUT7 restrict retrotransposition of long interspersed element-1 (LINE-1) in cooperation with MOV10 counteracting the RNA chaperonne activity of L1RE1. TUT7 uridylates LINE-1 mRNAs in the cytoplasm which inhibits initiation of reverse transcription once in the nucleus, whereas uridylation by TUT4 destabilizes mRNAs in cytoplasmic ribonucleoprotein granules. The protein is Terminal uridylyltransferase 7 of Mus musculus (Mouse).